The following is a 493-amino-acid chain: Farnesoate epoxidase (493 aa).

An N-terminal signal peptide occupies residues 1 to 24; sequence MLALIVLCFILFFYIISRRHRGLC. Cysteine 433 lines the heme pocket.

This sequence belongs to the cytochrome P450 family. Requires heme as cofactor. As to expression, constitutively expressed in corpora allata from the first instar larval to adult stages.

It catalyses the reaction (2E,6E)-farnesoate + reduced [NADPH--hemoprotein reductase] + O2 = juvenile hormone III carboxylate + oxidized [NADPH--hemoprotein reductase] + H2O + H(+). Its function is as follows. Catalyzes the conversion of farnesoate to juvenile hormone III acid in juvenile hormone biosynthesis. This Bombyx mori (Silk moth) protein is Farnesoate epoxidase.